Here is a 165-residue protein sequence, read N- to C-terminus: MKVIQGDYRGEGLKIAVVVPRFNDLVTSKLLEGALDGLKRHGVSDENITVVRIPGSMEAIYTLKKLLDLNVHDAIIVLGAVIRGETYHFNVVANEIGKAVAQFNMTSDIPIVFGVLTTDTLEQALNRAGAKSGNKGFEAAMVAIEMANLRKRLRRDVFESDSNGR.

5-amino-6-(D-ribitylamino)uracil is bound by residues Phe22, 56 to 58 (SME), and 80 to 82 (AVI). 85-86 (ET) serves as a coordination point for (2S)-2-hydroxy-3-oxobutyl phosphate. His88 functions as the Proton donor in the catalytic mechanism. Phe113 provides a ligand contact to 5-amino-6-(D-ribitylamino)uracil. Residue Arg127 coordinates (2S)-2-hydroxy-3-oxobutyl phosphate.

It belongs to the DMRL synthase family.

The catalysed reaction is (2S)-2-hydroxy-3-oxobutyl phosphate + 5-amino-6-(D-ribitylamino)uracil = 6,7-dimethyl-8-(1-D-ribityl)lumazine + phosphate + 2 H2O + H(+). It functions in the pathway cofactor biosynthesis; riboflavin biosynthesis; riboflavin from 2-hydroxy-3-oxobutyl phosphate and 5-amino-6-(D-ribitylamino)uracil: step 1/2. Its function is as follows. Catalyzes the formation of 6,7-dimethyl-8-ribityllumazine by condensation of 5-amino-6-(D-ribitylamino)uracil with 3,4-dihydroxy-2-butanone 4-phosphate. This is the penultimate step in the biosynthesis of riboflavin. The sequence is that of 6,7-dimethyl-8-ribityllumazine synthase from Thermotoga petrophila (strain ATCC BAA-488 / DSM 13995 / JCM 10881 / RKU-1).